The sequence spans 388 residues: Protein TsgA homolog (388 aa).

The next 12 membrane-spanning stretches (helical) occupy residues 11–31, 50–70, 77–97, 101–121, 133–153, 160–180, 206–226, 244–264, 268–288, 298–318, 332–352, and 360–380; these read WISF…GMIM, TFLN…IEII, IFSF…NSIF, INMF…TFII, LLLL…IVTA, IIWY…FLLT, VFLL…FISW, SLVS…SFII, NLYR…YCFI, YIII…ITLA, LILL…SPIV, and TLIS…LIYF.

It belongs to the major facilitator superfamily. TsgA family.

It localises to the cell membrane. This chain is Protein TsgA homolog, found in Buchnera aphidicola subsp. Acyrthosiphon pisum (strain 5A).